A 44-amino-acid polypeptide reads, in one-letter code: Photosystem I reaction center subunit IX (44 aa).

The chain crosses the membrane as a helical span at residues 9-29 (FMRSAPIVAAIWISLTAGIII).

Belongs to the PsaJ family.

It localises to the cellular thylakoid membrane. May help in the organization of the PsaE and PsaF subunits. The protein is Photosystem I reaction center subunit IX of Prochlorococcus marinus (strain MIT 9515).